Reading from the N-terminus, the 320-residue chain is o-succinylbenzoate synthase (320 aa).

The active-site Proton donor is the K133. Positions 161, 190, and 213 each coordinate Mg(2+). K235 functions as the Proton acceptor in the catalytic mechanism.

Belongs to the mandelate racemase/muconate lactonizing enzyme family. MenC type 1 subfamily. The cofactor is a divalent metal cation.

It catalyses the reaction (1R,6R)-6-hydroxy-2-succinyl-cyclohexa-2,4-diene-1-carboxylate = 2-succinylbenzoate + H2O. It participates in quinol/quinone metabolism; 1,4-dihydroxy-2-naphthoate biosynthesis; 1,4-dihydroxy-2-naphthoate from chorismate: step 4/7. The protein operates within quinol/quinone metabolism; menaquinone biosynthesis. Converts 2-succinyl-6-hydroxy-2,4-cyclohexadiene-1-carboxylate (SHCHC) to 2-succinylbenzoate (OSB). The protein is o-succinylbenzoate synthase of Citrobacter koseri (strain ATCC BAA-895 / CDC 4225-83 / SGSC4696).